The primary structure comprises 219 residues: uncharacterized protein (219 aa).

The N-terminal stretch at 1 to 26 is a signal peptide; the sequence is MNDRGVPNSRTGPSLLALLPAANSYA. 2 disordered regions span residues 36 to 57 and 88 to 219; these read AVGVGGGSYKSPTRGSPGTRGG and SGLG…GLCE. A compositionally biased stretch (low complexity) spans 127–173; sequence LSPPSALGSSPAGRGRPAPAIAAAKSSPLSASAAPGRCGARPRAPSR. The segment covering 176–202 has biased composition (basic residues); it reads RERRPRGNPRAPLRRGARGRRRSHTRG.

This is an uncharacterized protein from Gallid herpesvirus 2 (strain Chicken/Md5/ATCC VR-987) (GaHV-2).